The chain runs to 239 residues: Large ribosomal subunit protein uL2 (239 aa).

2 disordered regions span residues 1–20 and 203–239; these read MGKSLIQQRRGKGSPTFRSP and PFGGKEHHPGKPTTTSRRAPPGRKVGHIAARRTGRRK. Positions 222–239 are enriched in basic residues; sequence PPGRKVGHIAARRTGRRK.

Belongs to the universal ribosomal protein uL2 family. Part of the 50S ribosomal subunit. Forms a bridge to the 30S subunit in the 70S ribosome.

Its function is as follows. One of the primary rRNA binding proteins. Required for association of the 30S and 50S subunits to form the 70S ribosome, for tRNA binding and peptide bond formation. It has been suggested to have peptidyltransferase activity; this is somewhat controversial. Makes several contacts with the 16S rRNA in the 70S ribosome. In Pyrococcus horikoshii (strain ATCC 700860 / DSM 12428 / JCM 9974 / NBRC 100139 / OT-3), this protein is Large ribosomal subunit protein uL2.